The primary structure comprises 391 residues: Elongation factor Tu (391 aa).

The tr-type G domain occupies 10–201 (KPHVNIGTIG…EVDKYIPTPE (192 aa)). The interval 19-26 (GHVDHGKT) is G1. 19–26 (GHVDHGKT) contributes to the GTP binding site. Thr-26 contacts Mg(2+). The interval 55 to 59 (GITIS) is G2. The segment at 76 to 79 (DCPG) is G3. GTP contacts are provided by residues 76–80 (DCPGH) and 131–134 (NKVD). The tract at residues 131 to 134 (NKVD) is G4. Residues 169 to 171 (SAL) form a G5 region.

Belongs to the TRAFAC class translation factor GTPase superfamily. Classic translation factor GTPase family. EF-Tu/EF-1A subfamily. As to quaternary structure, monomer.

Its subcellular location is the cytoplasm. The catalysed reaction is GTP + H2O = GDP + phosphate + H(+). Functionally, GTP hydrolase that promotes the GTP-dependent binding of aminoacyl-tRNA to the A-site of ribosomes during protein biosynthesis. The polypeptide is Elongation factor Tu (Chelativorans sp. (strain BNC1)).